We begin with the raw amino-acid sequence, 511 residues long: Bifunctional purine biosynthesis protein PurH (511 aa).

An MGS-like domain is found at 1-145 (MKKRALVSVS…KNHKFVSVIV (145 aa)).

This sequence belongs to the PurH family.

The enzyme catalyses (6R)-10-formyltetrahydrofolate + 5-amino-1-(5-phospho-beta-D-ribosyl)imidazole-4-carboxamide = 5-formamido-1-(5-phospho-D-ribosyl)imidazole-4-carboxamide + (6S)-5,6,7,8-tetrahydrofolate. It carries out the reaction IMP + H2O = 5-formamido-1-(5-phospho-D-ribosyl)imidazole-4-carboxamide. It participates in purine metabolism; IMP biosynthesis via de novo pathway; 5-formamido-1-(5-phospho-D-ribosyl)imidazole-4-carboxamide from 5-amino-1-(5-phospho-D-ribosyl)imidazole-4-carboxamide (10-formyl THF route): step 1/1. The protein operates within purine metabolism; IMP biosynthesis via de novo pathway; IMP from 5-formamido-1-(5-phospho-D-ribosyl)imidazole-4-carboxamide: step 1/1. This chain is Bifunctional purine biosynthesis protein PurH, found in Bacillus mycoides (strain KBAB4) (Bacillus weihenstephanensis).